Here is a 387-residue protein sequence, read N- to C-terminus: Mannitol-1-phosphate 5-dehydrogenase (387 aa).

3-14 (ALHFGAGNIGRG) is a binding site for NAD(+).

The protein belongs to the mannitol dehydrogenase family.

The enzyme catalyses D-mannitol 1-phosphate + NAD(+) = beta-D-fructose 6-phosphate + NADH + H(+). The sequence is that of Mannitol-1-phosphate 5-dehydrogenase from Yersinia pseudotuberculosis serotype IB (strain PB1/+).